Consider the following 396-residue polypeptide: Phosphoglycerate kinase (396 aa).

Residues 21–23 (DFN), R36, 59–62 (HFDR), R118, and R151 each bind substrate. ATP is bound by residues K201, E323, and 353–356 (GGDT).

This sequence belongs to the phosphoglycerate kinase family. As to quaternary structure, monomer.

It is found in the cytoplasm. It carries out the reaction (2R)-3-phosphoglycerate + ATP = (2R)-3-phospho-glyceroyl phosphate + ADP. It functions in the pathway carbohydrate degradation; glycolysis; pyruvate from D-glyceraldehyde 3-phosphate: step 2/5. The sequence is that of Phosphoglycerate kinase from Caulobacter vibrioides (strain ATCC 19089 / CIP 103742 / CB 15) (Caulobacter crescentus).